A 534-amino-acid polypeptide reads, in one-letter code: (R)-citramalate synthase (534 aa).

Residues 11–274 (FHVFDTTLRD…KQVLPEGRLR (264 aa)) form the Pyruvate carboxyltransferase domain.

The protein belongs to the alpha-IPM synthase/homocitrate synthase family.

The catalysed reaction is pyruvate + acetyl-CoA + H2O = (3R)-citramalate + CoA + H(+). It participates in amino-acid biosynthesis; L-isoleucine biosynthesis; 2-oxobutanoate from pyruvate: step 1/3. Its function is as follows. Catalyzes the condensation of pyruvate and acetyl-coenzyme A to form (R)-citramalate. This chain is (R)-citramalate synthase, found in Streptomyces coelicolor (strain ATCC BAA-471 / A3(2) / M145).